Consider the following 132-residue polypeptide: Small ribosomal subunit protein uS8 (132 aa).

This sequence belongs to the universal ribosomal protein uS8 family. As to quaternary structure, part of the 30S ribosomal subunit. Contacts proteins S5 and S12.

One of the primary rRNA binding proteins, it binds directly to 16S rRNA central domain where it helps coordinate assembly of the platform of the 30S subunit. The chain is Small ribosomal subunit protein uS8 from Rhodococcus erythropolis (strain PR4 / NBRC 100887).